The sequence spans 707 residues: D-(-)-3-hydroxybutyrate oligomer hydrolase (707 aa).

The first 24 residues, 1–24 (MHHDNFRRLGNAAFAAAAALLAVA), serve as a signal peptide directing secretion. S311 serves as the catalytic Charge relay system.

This sequence belongs to the D-(-)-3-hydroxybutyrate oligomer hydrolase family.

Its subcellular location is the secreted. The catalysed reaction is (3R)-hydroxybutanoate dimer + H2O = 2 (R)-3-hydroxybutanoate + H(+). It participates in lipid metabolism; butanoate metabolism. In terms of biological role, participates in the degradation of poly-3-hydroxybutyrate (PHB). It works downstream of poly(3-hydroxybutyrate) depolymerase, hydrolyzing D(-)-3-hydroxybutyrate oligomers of various length (3HB-oligomers) into 3HB-monomers. This is D-(-)-3-hydroxybutyrate oligomer hydrolase from Cupriavidus pinatubonensis (strain JMP 134 / LMG 1197) (Cupriavidus necator (strain JMP 134)).